A 612-amino-acid polypeptide reads, in one-letter code: 1-deoxy-D-xylulose-5-phosphate synthase (612 aa).

Residues histidine 77 and 118–120 each bind thiamine diphosphate; that span reads GHS. A Mg(2+)-binding site is contributed by aspartate 147. Thiamine diphosphate contacts are provided by residues 148 to 149, asparagine 176, tyrosine 288, and glutamate 365; that span reads AA. A Mg(2+)-binding site is contributed by asparagine 176.

It belongs to the transketolase family. DXPS subfamily. Homodimer. Mg(2+) is required as a cofactor. The cofactor is thiamine diphosphate.

It catalyses the reaction D-glyceraldehyde 3-phosphate + pyruvate + H(+) = 1-deoxy-D-xylulose 5-phosphate + CO2. The protein operates within metabolic intermediate biosynthesis; 1-deoxy-D-xylulose 5-phosphate biosynthesis; 1-deoxy-D-xylulose 5-phosphate from D-glyceraldehyde 3-phosphate and pyruvate: step 1/1. In terms of biological role, catalyzes the acyloin condensation reaction between C atoms 2 and 3 of pyruvate and glyceraldehyde 3-phosphate to yield 1-deoxy-D-xylulose-5-phosphate (DXP). This is 1-deoxy-D-xylulose-5-phosphate synthase from Malacoplasma penetrans (strain HF-2) (Mycoplasma penetrans).